The chain runs to 555 residues: Pyrophosphate--fructose 6-phosphate 1-phosphotransferase (555 aa).

Diphosphate is bound at residue G82. R146 is a substrate binding site. D176 contacts Mg(2+). Residues T204–D206, K243–Y244, M251–R253, E312, and Y428–R431 contribute to the substrate site. The active-site Proton acceptor is D206.

The protein belongs to the phosphofructokinase type A (PFKA) family. PPi-dependent PFK group II subfamily. Clade 'Long' sub-subfamily. Homodimer. Mg(2+) is required as a cofactor.

The protein localises to the cytoplasm. It carries out the reaction beta-D-fructose 6-phosphate + diphosphate = beta-D-fructose 1,6-bisphosphate + phosphate + H(+). It participates in carbohydrate degradation; glycolysis; D-glyceraldehyde 3-phosphate and glycerone phosphate from D-glucose: step 3/4. Non-allosteric. In terms of biological role, catalyzes the phosphorylation of D-fructose 6-phosphate, the first committing step of glycolysis. Uses inorganic phosphate (PPi) as phosphoryl donor instead of ATP like common ATP-dependent phosphofructokinases (ATP-PFKs), which renders the reaction reversible, and can thus function both in glycolysis and gluconeogenesis. Consistently, PPi-PFK can replace the enzymes of both the forward (ATP-PFK) and reverse (fructose-bisphosphatase (FBPase)) reactions. This chain is Pyrophosphate--fructose 6-phosphate 1-phosphotransferase, found in Borreliella burgdorferi (strain ATCC 35210 / DSM 4680 / CIP 102532 / B31) (Borrelia burgdorferi).